Here is a 315-residue protein sequence, read N- to C-terminus: N-acetyl-gamma-glutamyl-phosphate reductase (315 aa).

Cys-117 is a catalytic residue.

This sequence belongs to the NAGSA dehydrogenase family. Type 2 subfamily.

The protein resides in the cytoplasm. The catalysed reaction is N-acetyl-L-glutamate 5-semialdehyde + phosphate + NADP(+) = N-acetyl-L-glutamyl 5-phosphate + NADPH + H(+). It participates in amino-acid biosynthesis; L-arginine biosynthesis; N(2)-acetyl-L-ornithine from L-glutamate: step 3/4. In terms of biological role, catalyzes the NADPH-dependent reduction of N-acetyl-5-glutamyl phosphate to yield N-acetyl-L-glutamate 5-semialdehyde. The sequence is that of N-acetyl-gamma-glutamyl-phosphate reductase from Burkholderia lata (strain ATCC 17760 / DSM 23089 / LMG 22485 / NCIMB 9086 / R18194 / 383).